Here is a 40-residue protein sequence, read N- to C-terminus: Sulfur globule protein TR2 (40 aa).

It to C.vinosum CV3. As to quaternary structure, the protein envelope of the sulfur globules is composed of the three different proteins TR0, TR1 and TR2.

Structural protein of the sulfur globules, which are intracellular globules that serve for sulfur storage in purple sulfur bacteria. This chain is Sulfur globule protein TR2, found in Thiocapsa roseopersicina.